Consider the following 268-residue polypeptide: Hydroxyethylthiazole kinase 2 (268 aa).

Met-42 contacts substrate. ATP-binding residues include Lys-117 and Thr-167. Position 194 (Gly-194) interacts with substrate.

It belongs to the Thz kinase family. It depends on Mg(2+) as a cofactor.

The catalysed reaction is 5-(2-hydroxyethyl)-4-methylthiazole + ATP = 4-methyl-5-(2-phosphooxyethyl)-thiazole + ADP + H(+). It functions in the pathway cofactor biosynthesis; thiamine diphosphate biosynthesis; 4-methyl-5-(2-phosphoethyl)-thiazole from 5-(2-hydroxyethyl)-4-methylthiazole: step 1/1. Its function is as follows. Catalyzes the phosphorylation of the hydroxyl group of 4-methyl-5-beta-hydroxyethylthiazole (THZ). This chain is Hydroxyethylthiazole kinase 2, found in Streptococcus pneumoniae (strain CGSP14).